The chain runs to 339 residues: Serpentine receptor class alpha-24 (339 aa).

7 helical membrane passes run 26 to 46, 65 to 82, 112 to 132, 151 to 171, 199 to 219, 248 to 268, and 284 to 304; these read ITVKMSSVLVVTVILLSYYFA, LILLVCLLNSIIHQTTML, ELFVYYLTTYFSTYSVFSLAF, VSIFLLFIQLIFTLGTYYVGL, FRTLIMGICIIVTVFVYYLSV, VCILIVLQFACILISSLGVNY, and LAPFFVGVTYANLCLPLVIHC.

This sequence belongs to the nematode receptor-like protein sra family.

It is found in the membrane. This chain is Serpentine receptor class alpha-24 (sra-24), found in Caenorhabditis elegans.